A 511-amino-acid polypeptide reads, in one-letter code: Probable Xaa-Pro aminopeptidase MAA_08947 (511 aa).

Mn(2+) contacts are provided by D275, D286, E439, and E480.

The protein belongs to the peptidase M24B family. Requires Mn(2+) as cofactor.

It carries out the reaction Release of any N-terminal amino acid, including proline, that is linked to proline, even from a dipeptide or tripeptide.. Catalyzes the removal of a penultimate prolyl residue from the N-termini of peptides. The sequence is that of Probable Xaa-Pro aminopeptidase MAA_08947 from Metarhizium robertsii (strain ARSEF 23 / ATCC MYA-3075) (Metarhizium anisopliae (strain ARSEF 23)).